A 151-amino-acid chain; its full sequence is Large ribosomal subunit protein uL13 (151 aa).

Belongs to the universal ribosomal protein uL13 family. As to quaternary structure, part of the 50S ribosomal subunit.

In terms of biological role, this protein is one of the early assembly proteins of the 50S ribosomal subunit, although it is not seen to bind rRNA by itself. It is important during the early stages of 50S assembly. The protein is Large ribosomal subunit protein uL13 of Synechococcus sp. (strain JA-2-3B'a(2-13)) (Cyanobacteria bacterium Yellowstone B-Prime).